A 595-amino-acid polypeptide reads, in one-letter code: MAETDIAMPESTPVDSRPAFAIVEELKTKFGENFYVQATFEEFPTVWVERARVQEVLMFLRKVERPYVMLFDLSAMDERLRQHRDGLPASDFTVFYHLLSLERNSDIRIKVALNENDLNLPTATNIWPNANWYEREAYDMFGINFEGHPMLRRILLPTYWEGHPLRKEYSARATEYTPYMQDKAKQDFEQEHLRFVPEDWGLKRGNADEDFMFLNLGPNHPSAHGAFRIVLQLDGEEVKDCVPDIGYHHRGVEKMAERQTWHSFIPYTDRVDYLGGCAQNMPYVMAVEQLAGIKVPERAQVIRVMLNELFRINNHLLYCGTAIQDAGGMTPVFYMFADRQKVYDIVEAITGYRMHPAWFRIGGTAHDLPNNWQKLVKELLDWMPKRLNEYYTAAFKNSVFIGRTRNVAQYDAKSALAWGVTGTGLRATGIDFDVRKYRPYSGYENFDFEVPVEYEGDAYARVLVHFREIEQSLKIIKQCLDNMPSGPYKADHPLAVPPPKDKTLQDIETLITHFLSVSWGPVMPAGEASFMTEVVKGASTYYLTSDKATMSYRTRIRTPTFTHLQQIPSVINGSLVSDLIIYLATIDVVMADVDR.

Positions 1 to 186 (MAETDIAMPE…TPYMQDKAKQ (186 aa)) are NADH dehydrogenase I subunit C. Residues 210 to 595 (DFMFLNLGPN…IDVVMADVDR (386 aa)) form an NADH dehydrogenase I subunit D region.

In the N-terminal section; belongs to the complex I 30 kDa subunit family. This sequence in the C-terminal section; belongs to the complex I 49 kDa subunit family. As to quaternary structure, NDH-1 is composed of 13 different subunits. Subunits NuoB, CD, E, F, and G constitute the peripheral sector of the complex.

Its subcellular location is the cell inner membrane. It carries out the reaction a quinone + NADH + 5 H(+)(in) = a quinol + NAD(+) + 4 H(+)(out). Its function is as follows. NDH-1 shuttles electrons from NADH, via FMN and iron-sulfur (Fe-S) centers, to quinones in the respiratory chain. The immediate electron acceptor for the enzyme in this species is believed to be ubiquinone. Couples the redox reaction to proton translocation (for every two electrons transferred, four hydrogen ions are translocated across the cytoplasmic membrane), and thus conserves the redox energy in a proton gradient. This is NADH-quinone oxidoreductase subunit C/D from Acinetobacter baumannii (strain AYE).